We begin with the raw amino-acid sequence, 341 residues long: Anthranilate phosphoribosyltransferase (341 aa).

Residues Gly-80, 83 to 84 (GD), Thr-88, 90 to 93 (NIST), 108 to 116 (KHGNRAVSS), and Ser-120 each bind 5-phospho-alpha-D-ribose 1-diphosphate. Residue Gly-80 coordinates anthranilate. Ser-92 contacts Mg(2+). Asn-111 provides a ligand contact to anthranilate. Arg-166 serves as a coordination point for anthranilate. The Mg(2+) site is built by Asp-225 and Glu-226.

Belongs to the anthranilate phosphoribosyltransferase family. In terms of assembly, homodimer. The cofactor is Mg(2+).

It carries out the reaction N-(5-phospho-beta-D-ribosyl)anthranilate + diphosphate = 5-phospho-alpha-D-ribose 1-diphosphate + anthranilate. Its pathway is amino-acid biosynthesis; L-tryptophan biosynthesis; L-tryptophan from chorismate: step 2/5. Its function is as follows. Catalyzes the transfer of the phosphoribosyl group of 5-phosphorylribose-1-pyrophosphate (PRPP) to anthranilate to yield N-(5'-phosphoribosyl)-anthranilate (PRA). This chain is Anthranilate phosphoribosyltransferase, found in Priestia megaterium (strain ATCC 12872 / QMB1551) (Bacillus megaterium).